The following is a 91-amino-acid chain: MVCYLYWETFPSISHLLKITLSARDCHVCGLNLFIFMDPVENQALHPVIMALILMPSLHCFGNILILLFLKSPAQLFCRMSVDLALLFPHK.

A helical transmembrane segment spans residues 49–69 (IMALILMPSLHCFGNILILLF).

The protein localises to the membrane. The chain is Putative transmembrane protein encoded by LINC00862 (LINC00862) from Homo sapiens (Human).